Here is a 173-residue protein sequence, read N- to C-terminus: Shikimate kinase (173 aa).

16–21 (GSGKTT) contributes to the ATP binding site. Thr-20 lines the Mg(2+) pocket. Asp-38, Arg-62, and Gly-83 together coordinate substrate. Residue Arg-120 participates in ATP binding. Substrate is bound at residue Arg-139. Residue Arg-156 participates in ATP binding.

Belongs to the shikimate kinase family. Monomer. Requires Mg(2+) as cofactor.

The protein localises to the cytoplasm. It catalyses the reaction shikimate + ATP = 3-phosphoshikimate + ADP + H(+). Its pathway is metabolic intermediate biosynthesis; chorismate biosynthesis; chorismate from D-erythrose 4-phosphate and phosphoenolpyruvate: step 5/7. In terms of biological role, catalyzes the specific phosphorylation of the 3-hydroxyl group of shikimic acid using ATP as a cosubstrate. The polypeptide is Shikimate kinase (Corynebacterium diphtheriae (strain ATCC 700971 / NCTC 13129 / Biotype gravis)).